Reading from the N-terminus, the 126-residue chain is Holo-[acyl-carrier-protein] synthase (126 aa).

D9 and E57 together coordinate Mg(2+).

This sequence belongs to the P-Pant transferase superfamily. AcpS family. Mg(2+) serves as cofactor.

The protein resides in the cytoplasm. It catalyses the reaction apo-[ACP] + CoA = holo-[ACP] + adenosine 3',5'-bisphosphate + H(+). Its function is as follows. Transfers the 4'-phosphopantetheine moiety from coenzyme A to a Ser of acyl-carrier-protein. In Idiomarina loihiensis (strain ATCC BAA-735 / DSM 15497 / L2-TR), this protein is Holo-[acyl-carrier-protein] synthase.